Reading from the N-terminus, the 846-residue chain is Protein arginine N-methyltransferase 9 (846 aa).

3 TPR repeats span residues 25 to 58, 67 to 100, and 101 to 134; these read VARSLQSAEHCLGDQDFGTAYAHYLLVLSLAPEL, QYTLFKWAEELHALSRIQDLLGCYEQALELFPDD, and EVICNSMGEHLFRMGFRDEAAGYFHKAVKLNPDF. SAM-dependent MTase PRMT-type domains are found at residues 137 to 466 and 530 to 846; these read AKEN…YLRI and NIPY…AVKP.

The protein belongs to the class I-like SAM-binding methyltransferase superfamily. Protein arginine N-methyltransferase family. As to quaternary structure, found in a complex with PRMT9, SF3B2 and SF3B4. Interacts with SF3B2.

It localises to the cytoplasm. It carries out the reaction L-arginyl-[protein] + 2 S-adenosyl-L-methionine = N(omega),N(omega)'-dimethyl-L-arginyl-[protein] + 2 S-adenosyl-L-homocysteine + 2 H(+). In terms of biological role, arginine methyltransferase that can both catalyze the formation of omega-N monomethylarginine (MMA) and symmetrical dimethylarginine (sDMA). Specifically mediates the symmetrical dimethylation of SF3B2. Involved in the regulation of alternative splicing of pre-mRNA. This is Protein arginine N-methyltransferase 9 (Prmt9) from Mus musculus (Mouse).